Reading from the N-terminus, the 64-residue chain is Large ribosomal subunit protein bL35 (64 aa).

Residues 1 to 31 (MPKMKTHSGAKKRFKLTGTGKLKRQQANRRH) form a disordered region.

The protein belongs to the bacterial ribosomal protein bL35 family.

In Paenarthrobacter aurescens (strain TC1), this protein is Large ribosomal subunit protein bL35.